Here is a 202-residue protein sequence, read N- to C-terminus: LexA repressor (202 aa).

A DNA-binding region (H-T-H motif) is located at residues 29–49 (VREICEATGLKSTSTVHGHLT). Catalysis depends on for autocatalytic cleavage activity residues serine 126 and lysine 163.

The protein belongs to the peptidase S24 family. As to quaternary structure, homodimer.

The enzyme catalyses Hydrolysis of Ala-|-Gly bond in repressor LexA.. Represses a number of genes involved in the response to DNA damage (SOS response), including recA and lexA. In the presence of single-stranded DNA, RecA interacts with LexA causing an autocatalytic cleavage which disrupts the DNA-binding part of LexA, leading to derepression of the SOS regulon and eventually DNA repair. The sequence is that of LexA repressor from Caldicellulosiruptor saccharolyticus (strain ATCC 43494 / DSM 8903 / Tp8T 6331).